The following is a 660-amino-acid chain: tRNA 5-methylaminomethyl-2-thiouridine biosynthesis bifunctional protein MnmC (660 aa).

A tRNA (mnm(5)s(2)U34)-methyltransferase region spans residues 1–235; it reads MTITRHARID…KWEVLRGAFI (235 aa). Positions 266 to 660 are FAD-dependent cmnm(5)s(2)U34 oxidoreductase; it reads IGAGLAGCAT…LRGLIRGGGK (395 aa).

In the N-terminal section; belongs to the methyltransferase superfamily. tRNA (mnm(5)s(2)U34)-methyltransferase family. This sequence in the C-terminal section; belongs to the DAO family. FAD is required as a cofactor.

It is found in the cytoplasm. It carries out the reaction 5-aminomethyl-2-thiouridine(34) in tRNA + S-adenosyl-L-methionine = 5-methylaminomethyl-2-thiouridine(34) in tRNA + S-adenosyl-L-homocysteine + H(+). Functionally, catalyzes the last two steps in the biosynthesis of 5-methylaminomethyl-2-thiouridine (mnm(5)s(2)U) at the wobble position (U34) in tRNA. Catalyzes the FAD-dependent demodification of cmnm(5)s(2)U34 to nm(5)s(2)U34, followed by the transfer of a methyl group from S-adenosyl-L-methionine to nm(5)s(2)U34, to form mnm(5)s(2)U34. The protein is tRNA 5-methylaminomethyl-2-thiouridine biosynthesis bifunctional protein MnmC of Pseudomonas syringae pv. tomato (strain ATCC BAA-871 / DC3000).